The sequence spans 381 residues: Endolytic peptidoglycan transglycosylase RlpA (381 aa).

An N-terminal signal peptide occupies residues 1–19 (MRKQLPVICVAAGIVLLAA). A lipid anchor (N-palmitoyl cysteine) is attached at C20. A lipid anchor (S-diacylglycerol cysteine) is attached at C20. Residues 196-274 (LPPRPDLSGG…QPAPVSAPVA (79 aa)) form a disordered region. A compositionally biased stretch (low complexity) spans 208 to 218 (SASSAPAQPQG). The region spanning 304–380 (AAASGRFVVQ…AQLQSFIASA (77 aa)) is the SPOR domain.

Belongs to the RlpA family.

It is found in the cell membrane. Functionally, lytic transglycosylase with a strong preference for naked glycan strands that lack stem peptides. The protein is Endolytic peptidoglycan transglycosylase RlpA of Salmonella typhimurium (strain LT2 / SGSC1412 / ATCC 700720).